A 550-amino-acid chain; its full sequence is Phosphatidylinositol 4-kinase gamma 2 (550 aa).

2 consecutive Ubiquitin-like domains span residues 34–111 (SVLV…YDPL) and 112–190 (LVTV…VEDT). The disordered stretch occupies residues 228–247 (VDGLNKGSPPVRSAEGTGGT). The 299-residue stretch at 234 to 532 (GSPPVRSAEG…SVLPASSEAT (299 aa)) folds into the PI3K/PI4K catalytic domain. The interval 240-246 (SAEGTGG) is G-loop. Residues 241-247 (AEGTGGT), Lys-263, and 359-362 (QMFM) each bind ATP. The catalytic loop stretch occupies residues 392–400 (ANADRHAGN). The activation loop stretch occupies residues 415 to 441 (PIDHGYCLPENFEDCTFEWLYWPQAKL). Asp-417 is a binding site for ATP.

It belongs to the PI3/PI4-kinase family. Type II PI4K subfamily.

The protein localises to the membrane. The enzyme catalyses a 1,2-diacyl-sn-glycero-3-phospho-(1D-myo-inositol) + ATP = a 1,2-diacyl-sn-glycero-3-phospho-(1D-myo-inositol 4-phosphate) + ADP + H(+). In terms of biological role, the phosphorylation of phosphatidylinositol (PI) to PI4P is the first committed step in the generation of phosphatidylinositol 4,5-bisphosphate (PIP2), a precursor of the second messenger inositol 1,4,5-trisphosphate (InsP3). This chain is Phosphatidylinositol 4-kinase gamma 2 (PI4KG2), found in Arabidopsis thaliana (Mouse-ear cress).